A 422-amino-acid chain; its full sequence is tRNA hydroxylation protein P (422 aa).

An N-terminal signal peptide occupies residues Met1 to Ala58.

It belongs to the peptidase U32 family.

In terms of biological role, involved in prephenate-dependent formation of 5-hydroxyuridine (ho5U) modification at position 34 in tRNAs, the first step in 5-carboxymethoxyuridine (cmo5U) biosynthesis. This is tRNA hydroxylation protein P from Helicobacter pylori (strain J99 / ATCC 700824) (Campylobacter pylori J99).